We begin with the raw amino-acid sequence, 456 residues long: Enolase (456 aa).

Q169 is a (2R)-2-phosphoglycerate binding site. E211 serves as the catalytic Proton donor. Residues D252, E314, and D341 each coordinate Mg(2+). Residues K366, R395, S396, and K417 each contribute to the (2R)-2-phosphoglycerate site. Catalysis depends on K366, which acts as the Proton acceptor.

It belongs to the enolase family. It depends on Mg(2+) as a cofactor.

The protein localises to the cytoplasm. It is found in the secreted. It localises to the cell surface. It carries out the reaction (2R)-2-phosphoglycerate = phosphoenolpyruvate + H2O. It functions in the pathway carbohydrate degradation; glycolysis; pyruvate from D-glyceraldehyde 3-phosphate: step 4/5. In terms of biological role, catalyzes the reversible conversion of 2-phosphoglycerate (2-PG) into phosphoenolpyruvate (PEP). It is essential for the degradation of carbohydrates via glycolysis. This is Enolase from Metamycoplasma arthritidis (strain 158L3-1) (Mycoplasma arthritidis).